We begin with the raw amino-acid sequence, 793 residues long: Outer membrane protein assembly factor BamA (793 aa).

A signal peptide spans 1 to 19 (MKKLLIASLLFGTTTTVFA). POTRA domains lie at 22 to 89 (FVAK…VVAK), 90 to 170 (SIIS…INED), 173 to 259 (AKLA…VNEG), 262 to 341 (YDLR…VDAG), and 344 to 418 (LTVR…VKER).

Belongs to the BamA family. In terms of assembly, part of the Bam complex.

Its subcellular location is the cell outer membrane. Part of the outer membrane protein assembly complex, which is involved in assembly and insertion of beta-barrel proteins into the outer membrane. This Haemophilus influenzae protein is Outer membrane protein assembly factor BamA.